A 999-amino-acid polypeptide reads, in one-letter code: Disks large-associated protein 1 (999 aa).

Disordered regions lie at residues 155–213, 395–418, and 918–989; these read HSLE…GYWS, MAEDDSGDSDGSPKPSPKMQARRA, and NWRP…DSIE. The span at 194 to 204 shows a compositional bias: basic and acidic residues; it reads RERCKSAEPKN. Composition is skewed to basic and acidic residues over residues 923–932 and 947–965; these read DPPERKERRL and LARDRSLESTEKQRQEARK. Positions 976-985 are enriched in polar residues; it reads VRQNSATESA. The PDZ-binding signature appears at 997-999; that stretch reads TRL.

Belongs to the SAPAP family.

The protein localises to the cell membrane. Its subcellular location is the postsynaptic density. It localises to the synapse. Its function is as follows. Part of the postsynaptic scaffold in neuronal cells. This Danio rerio (Zebrafish) protein is Disks large-associated protein 1.